Here is a 284-residue protein sequence, read N- to C-terminus: RNase adapter protein RapZ (284 aa).

An ATP-binding site is contributed by 8 to 15 (GRSGSGKS). Position 56 to 59 (56 to 59 (DVRN)) interacts with GTP. The RNA-binding stretch occupies residues 266–284 (RSRGKNVQSRHRTLEKRKT).

The protein belongs to the RapZ-like family. RapZ subfamily. Homotrimer.

Its function is as follows. Modulates the synthesis of GlmS, by affecting the processing and stability of the regulatory small RNA GlmZ. When glucosamine-6-phosphate (GlcN6P) concentrations are high in the cell, RapZ binds GlmZ and targets it to cleavage by RNase E. Consequently, GlmZ is inactivated and unable to activate GlmS synthesis. Under low GlcN6P concentrations, RapZ is sequestered and inactivated by an other regulatory small RNA, GlmY, preventing GlmZ degradation and leading to synthesis of GlmS. This chain is RNase adapter protein RapZ, found in Citrobacter koseri (strain ATCC BAA-895 / CDC 4225-83 / SGSC4696).